The primary structure comprises 501 residues: Neuronal acetylcholine receptor subunit beta-2 (501 aa).

An N-terminal signal peptide occupies residues 1 to 25 (MARCSNSMALLFSFGLLWLCSGVLG). The Extracellular portion of the chain corresponds to 26–238 (TDTEERLVEH…IIRRKPLFYT (213 aa)). Residues Asn51 and Asn168 are each glycosylated (N-linked (GlcNAc...) asparagine). Residues Cys155 and Cys169 are joined by a disulfide bond. Residues 239–259 (INLIIPCVLITSLAILVFYLP) form a helical membrane-spanning segment. Residues 260–267 (SDCGEKMT) are Cytoplasmic-facing. Residues 268–288 (LCISVLLALTVFLLLISKIVP) form a helical membrane-spanning segment. The Extracellular portion of the chain corresponds to 289–300 (PTSLDVPLVGKY). The chain crosses the membrane as a helical span at residues 301–321 (LMFTMVLVTFSIVTSVCVLNV). At 322–459 (HHRSPTTHTM…WKYVAMVIDR (138 aa)) the chain is on the cytoplasmic side. Residues 460-480 (LFLWIFVFVCVFGTIGMFLQP) traverse the membrane as a helical segment.

It belongs to the ligand-gated ion channel (TC 1.A.9) family. Acetylcholine receptor (TC 1.A.9.1) subfamily. Beta-2/CHRNB2 sub-subfamily. As to quaternary structure, neuronal AChR is a heteropentamer composed of two different types of subunits: alpha and beta. CHRNB2/Beta-2 subunit can be combined to CHRNA2/alpha-2, CHRNA3/alpha-3 or CHRNA4/alpha-4, CHRNA5/alpha-5, CHRNA6/alpha-6 and CHRNB3/beta-3 to give rise to functional receptors. CHRNA2:CHRNB2 and CHRNA4:CHRNB2 nAChR complexes exist in two subtypes: LS (low agonist sensitivity) with a (CHRNA2/4)3:(CHRNB2)2 and HS (high agonist sensitivity) with a (CHRNA2/4)2:(CHRNB2)3 stoichiometry; the subtypes differ in their subunit binding interfaces which are involved in ligand binding. Cells produce predominantly an (CHRNA4)3:(CHRNB2)2 nAChR. The stoichiometric form (CHRNA4)2:(CHRNB2)3 expression is selectively up-regulated by nicotine and has lower single channel conductance and calcium permeability. Also part of the stoichiometric forms: (CHRNA4:CHRNB2)2:CHRNB3 or (CHRNA6:CHRNB2)2:CHRNB3. Can form heteropentamers with CHRNA7, mainly found in basal forebrain cholinergic neurons. Interacts with RIC3; which is required for proper folding and assembly. Interacts with LYPD6.

Its subcellular location is the synaptic cell membrane. The protein localises to the cell membrane. It carries out the reaction K(+)(in) = K(+)(out). The catalysed reaction is Na(+)(in) = Na(+)(out). It catalyses the reaction Ca(2+)(in) = Ca(2+)(out). Its activity is regulated as follows. Activated by a myriad of ligands such as acetylcholine, cytisine, nicotine, choline and epibatidine. Channel potentiation by calcium is stoichiometry-selective, CHRNA4:CHRNB2 nACh receptor is achieved by calcium association with topographically distinct sites framed by anionic residues within the CHRNA4 subunit and between the CHRNA4 and CHRNB2 subunits. Oligomeric amyloid-beta protein 42 activates specifially CHRNA7:CHRNB2 nAchRs. nAChR activity is inhibited by the antagonist alpha-conotoxins BuIA, PnIA, PnIC, GID and MII, small disulfide-constrained peptides from cone snails. Component of neuronal acetylcholine receptors (nAChRs) that function as pentameric, ligand-gated cation channels with high calcium permeability among other activities. nAChRs are excitatory neurotrasnmitter receptors formed by a collection of nAChR subunits known to mediate synaptic transmission in the nervous system and the neuromuscular junction. Each nAchR subunit confers differential attributes to channel properties, including activation, deactivation and desensitization kinetics, pH sensitivity, cation permeability, and binding to allosteric modulators. CHRNB2 forms heteropentameric neuronal acetylcholine receptors with CHRNA2, CHRNA3, CHRNA4 and CHRNA6, as well as CHRNA5 and CHRNB3 as accesory subunits. Found in two major stoichiometric forms,(CHRNA4)3:(CHRNB2)2 and (CHRNA4)2:(CHRNB2)3, the two stoichiometric forms differ in their unitary conductance, calcium permeability, ACh sensitivity and potentiation by divalent cation. Heteropentameric channels with CHRNA6 and CHRNA4 exhibit high sensitivity to ACh and nicotine and are predominantly expressed in only a few brain areas, including dopaminergic neurons, norepirephrine neurons and cells of the visual system. nAChrs containing CHRNA6 subunits mediate endogenous cholinergic modulation of dopamine and gamma-aminobutyric acid (GABA) release in response to nicotine at nerve terminals. Also forms functional nAChRs with other subunits such as CHRNA7:CHRNB2, mainly expressed in basal forebrain cholinergic neurons. In Mus musculus (Mouse), this protein is Neuronal acetylcholine receptor subunit beta-2 (Chrnb2).